Consider the following 322-residue polypeptide: Beta-ketoacyl-[acyl-carrier-protein] synthase III (322 aa).

Active-site residues include Cys113 and His247. The segment at 248 to 252 is ACP-binding; it reads QANIR. Residue Asn278 is part of the active site.

The protein belongs to the thiolase-like superfamily. FabH family. Homodimer.

The protein resides in the cytoplasm. The catalysed reaction is malonyl-[ACP] + acetyl-CoA + H(+) = 3-oxobutanoyl-[ACP] + CO2 + CoA. It functions in the pathway lipid metabolism; fatty acid biosynthesis. Catalyzes the condensation reaction of fatty acid synthesis by the addition to an acyl acceptor of two carbons from malonyl-ACP. Catalyzes the first condensation reaction which initiates fatty acid synthesis and may therefore play a role in governing the total rate of fatty acid production. Possesses both acetoacetyl-ACP synthase and acetyl transacylase activities. Its substrate specificity determines the biosynthesis of branched-chain and/or straight-chain of fatty acids. The sequence is that of Beta-ketoacyl-[acyl-carrier-protein] synthase III from Tropheryma whipplei (strain TW08/27) (Whipple's bacillus).